Reading from the N-terminus, the 197-residue chain is ATP-dependent Clp protease proteolytic subunit (197 aa).

Ser-98 serves as the catalytic Nucleophile. His-123 is an active-site residue.

This sequence belongs to the peptidase S14 family. As to quaternary structure, fourteen ClpP subunits assemble into 2 heptameric rings which stack back to back to give a disk-like structure with a central cavity, resembling the structure of eukaryotic proteasomes.

It localises to the cytoplasm. It catalyses the reaction Hydrolysis of proteins to small peptides in the presence of ATP and magnesium. alpha-casein is the usual test substrate. In the absence of ATP, only oligopeptides shorter than five residues are hydrolyzed (such as succinyl-Leu-Tyr-|-NHMec, and Leu-Tyr-Leu-|-Tyr-Trp, in which cleavage of the -Tyr-|-Leu- and -Tyr-|-Trp bonds also occurs).. In terms of biological role, cleaves peptides in various proteins in a process that requires ATP hydrolysis. Has a chymotrypsin-like activity. Plays a major role in the degradation of misfolded proteins. The polypeptide is ATP-dependent Clp protease proteolytic subunit (Enterococcus faecalis (strain ATCC 700802 / V583)).